The primary structure comprises 572 residues: MEPRAPRRRHTHQRGYLLTRDPHLNKDLAFTLEERQQLNIHGLLPPCIISQELQVLRIIKNFERLNSDFDRYLLLMDLQDRNEKLFYSVLMSDVEKFMPIVYTPTVGLACQQYSLAFRKPRGLFISIHDKGHIASVLNAWPEDVVKAIVVTDGERILGLGDLGCNGMGIPVGKLALYTACGGVNPQQCLPITLDVGTENEELLKDPLYIGLRHRRVRGPEYDAFLDEFMEAASSKYGMNCLIQFEDFANRNAFRLLNKYRNKYCTFNDDIQGTASVAVAGLLAALRITKNKLSDQTVLFQGAGEAALGIAHLVVMAMEKEGLSKENARKKIWLVDSKGLIVKGRASLTEEKEVFAHEHEEMKNLEAIVQKIKPTALIGVAAIGGAFTEQILKDMAAFNERPIIFALSNPTSKAECSAEQCYKVTKGRAIFASGSPFDPVTLPDGRTLFPGQGNNSYVFPGVALGVVACGLRHIDDKVFLTTAEVISQQVSDKHLQEGRLYPPLNTIRGVSLKIAVKIVQDAYKEKMATVYPEPQNKEEFVSSQMYSTNYDQILPDCYPWPAEVQKIQTKVNQ.

Met1 is subject to N-acetylmethionine. Tyr102 functions as the Proton donor in the catalytic mechanism. NADP(+) is bound at residue Arg155. Lys173 serves as the catalytic Proton acceptor. Positions 245, 246, and 269 each coordinate a divalent metal cation. NADP(+)-binding positions include Asp269 and 301–318; that span reads GAGE…MAME. A Phosphoserine modification is found at Ser336.

The protein belongs to the malic enzymes family. Homotetramer. Mg(2+) serves as cofactor. It depends on Mn(2+) as a cofactor.

The protein localises to the cytoplasm. It catalyses the reaction (S)-malate + NADP(+) = pyruvate + CO2 + NADPH. It carries out the reaction oxaloacetate + H(+) = pyruvate + CO2. Functionally, catalyzes the oxidative decarboxylation of (S)-malate in the presence of NADP(+) and divalent metal ions, and decarboxylation of oxaloacetate. The protein is NADP-dependent malic enzyme (Me1) of Mus musculus (Mouse).